A 258-amino-acid chain; its full sequence is Regulatory protein RecX (258 aa).

Belongs to the RecX family.

The protein localises to the cytoplasm. In terms of biological role, modulates RecA activity. The sequence is that of Regulatory protein RecX from Streptococcus equi subsp. zooepidemicus (strain MGCS10565).